Reading from the N-terminus, the 615-residue chain is Elongation factor 4 (615 aa).

Residues 14–200 (ARIRNFCIIA…KVVELIPAPT (187 aa)) enclose the tr-type G domain. GTP is bound by residues 26–31 (DHGKST) and 147–150 (NKID).

Belongs to the TRAFAC class translation factor GTPase superfamily. Classic translation factor GTPase family. LepA subfamily.

It localises to the cell membrane. The catalysed reaction is GTP + H2O = GDP + phosphate + H(+). Its function is as follows. Required for accurate and efficient protein synthesis under certain stress conditions. May act as a fidelity factor of the translation reaction, by catalyzing a one-codon backward translocation of tRNAs on improperly translocated ribosomes. Back-translocation proceeds from a post-translocation (POST) complex to a pre-translocation (PRE) complex, thus giving elongation factor G a second chance to translocate the tRNAs correctly. Binds to ribosomes in a GTP-dependent manner. The protein is Elongation factor 4 of Corynebacterium glutamicum (strain ATCC 13032 / DSM 20300 / JCM 1318 / BCRC 11384 / CCUG 27702 / LMG 3730 / NBRC 12168 / NCIMB 10025 / NRRL B-2784 / 534).